The sequence spans 144 residues: Maximins 11/H11 (144 aa).

The signal sequence occupies residues 1-18 (MNFKYIVAVSFLIASAYA). Residues 19–43 (RSEENDEQSLSQRDVLEEESLREIR) constitute a propeptide that is removed on maturation. Asparagine 70 is modified (asparagine amide). A propeptide spanning residues 74-123 (TAEDHEVMKRLEAVMRDLDSLDYPEEASERETRGFNQEEIANLFTKKEKR) is cleaved from the precursor. Isoleucine 143 bears the Isoleucine amide mark.

This sequence belongs to the bombinin family. Expressed by the skin glands.

Its subcellular location is the secreted. Its function is as follows. Maximin-11 shows antimicrobial activity against bacteria and against the fungus C.albicans. It has little hemolytic activity. Maximin-H11 shows antimicrobial activity against bacteria and against the fungus C.albicans. Shows strong hemolytic activity. In Bombina maxima (Giant fire-bellied toad), this protein is Maximins 11/H11.